A 79-amino-acid chain; its full sequence is Small ribosomal subunit protein bS21A (79 aa).

Residues 57–79 (LARKKLQREGLLPAPKKVLRPTR) are disordered.

Belongs to the bacterial ribosomal protein bS21 family.

The polypeptide is Small ribosomal subunit protein bS21A (Rhizobium johnstonii (strain DSM 114642 / LMG 32736 / 3841) (Rhizobium leguminosarum bv. viciae)).